The chain runs to 115 residues: Small ribosomal subunit protein uS14m (115 aa).

Belongs to the universal ribosomal protein uS14 family. As to quaternary structure, component of the mitochondrial small ribosomal subunit (mt-SSU). Mature yeast 74S mitochondrial ribosomes consist of a small (37S) and a large (54S) subunit. The 37S small subunit contains a 15S ribosomal RNA (15S mt-rRNA) and 34 different proteins. The 54S large subunit contains a 21S rRNA (21S mt-rRNA) and 46 different proteins.

It localises to the mitochondrion. Its function is as follows. Component of the mitochondrial ribosome (mitoribosome), a dedicated translation machinery responsible for the synthesis of mitochondrial genome-encoded proteins, including at least some of the essential transmembrane subunits of the mitochondrial respiratory chain. The mitoribosomes are attached to the mitochondrial inner membrane and translation products are cotranslationally integrated into the membrane. This Saccharomyces cerevisiae (strain ATCC 204508 / S288c) (Baker's yeast) protein is Small ribosomal subunit protein uS14m (MRP2).